Consider the following 398-residue polypeptide: Digeranylgeranylglycerophospholipid reductase (398 aa).

The FAD site is built by Ala-15, Glu-34, Cys-45, Ala-46, Gly-48, Arg-99, Ala-123, Asp-280, Gly-292, and Ile-293. An a 2,3-bis-O-(geranylgeranyl)-sn-glycerol 1-phospholipid-binding site is contributed by Val-372.

This sequence belongs to the geranylgeranyl reductase family. DGGGPL reductase subfamily. The cofactor is FAD.

The catalysed reaction is a 2,3-bis-O-phytanyl-sn-glycerol 1-phospholipid + 8 oxidized 2[4Fe-4S]-[ferredoxin] = a 2,3-bis-O-(geranylgeranyl)-sn-glycerol 1-phospholipid + 8 reduced 2[4Fe-4S]-[ferredoxin] + 16 H(+). The enzyme catalyses 2,3-bis-O-(phytanyl)-sn-glycerol 1-phosphate + 8 oxidized 2[4Fe-4S]-[ferredoxin] = 2,3-bis-O-(geranylgeranyl)-sn-glycerol 1-phosphate + 8 reduced 2[4Fe-4S]-[ferredoxin] + 16 H(+). It carries out the reaction a 2,3-bis-O-phytanyl-sn-glycerol 1-phospholipid + 8 A = a 2,3-bis-O-(geranylgeranyl)-sn-glycerol 1-phospholipid + 8 AH2. It catalyses the reaction CDP-2,3-bis-O-(geranylgeranyl)-sn-glycerol + 8 AH2 = CDP-2,3-bis-O-(phytanyl)-sn-glycerol + 8 A. The catalysed reaction is archaetidylserine + 8 AH2 = 2,3-bis-O-phytanyl-sn-glycero-3-phospho-L-serine + 8 A. Its pathway is membrane lipid metabolism; glycerophospholipid metabolism. Functionally, is involved in the reduction of 2,3-digeranylgeranylglycerophospholipids (unsaturated archaeols) into 2,3-diphytanylglycerophospholipids (saturated archaeols) in the biosynthesis of archaeal membrane lipids. Catalyzes the formation of archaetidic acid (2,3-di-O-phytanyl-sn-glyceryl phosphate) from 2,3-di-O-geranylgeranylglyceryl phosphate (DGGGP) via the hydrogenation of each double bond of the isoprenoid chains. Is also probably able to reduce double bonds of geranyl groups in CDP-2,3-bis-O-(geranylgeranyl)-sn-glycerol and archaetidylserine, thus acting at various stages in the biosynthesis of archaeal membrane lipids. The protein is Digeranylgeranylglycerophospholipid reductase of Methanoculleus marisnigri (strain ATCC 35101 / DSM 1498 / JR1).